Reading from the N-terminus, the 366-residue chain is 3-dehydroquinate synthase (366 aa).

Residues 75–80, 109–113, 133–134, lysine 146, lysine 155, and 173–176 each bind NAD(+); these read DGEEYK, GVVGD, TT, and TLDT. Residues glutamate 188, histidine 251, and histidine 268 each contribute to the Zn(2+) site.

Belongs to the sugar phosphate cyclases superfamily. Dehydroquinate synthase family. Co(2+) is required as a cofactor. Requires Zn(2+) as cofactor. NAD(+) serves as cofactor.

The protein localises to the cytoplasm. The catalysed reaction is 7-phospho-2-dehydro-3-deoxy-D-arabino-heptonate = 3-dehydroquinate + phosphate. It participates in metabolic intermediate biosynthesis; chorismate biosynthesis; chorismate from D-erythrose 4-phosphate and phosphoenolpyruvate: step 2/7. In terms of biological role, catalyzes the conversion of 3-deoxy-D-arabino-heptulosonate 7-phosphate (DAHP) to dehydroquinate (DHQ). This is 3-dehydroquinate synthase from Nitrosospira multiformis (strain ATCC 25196 / NCIMB 11849 / C 71).